Here is a 160-residue protein sequence, read N- to C-terminus: Transcription elongation factor GreA (160 aa).

Positions 1–72 form a coiled coil; it reads MAEKTYVMTL…QIQILETKIR (72 aa).

This sequence belongs to the GreA/GreB family.

Functionally, necessary for efficient RNA polymerase transcription elongation past template-encoded arresting sites. The arresting sites in DNA have the property of trapping a certain fraction of elongating RNA polymerases that pass through, resulting in locked ternary complexes. Cleavage of the nascent transcript by cleavage factors such as GreA or GreB allows the resumption of elongation from the new 3'terminus. GreA releases sequences of 2 to 3 nucleotides. The polypeptide is Transcription elongation factor GreA (Streptococcus thermophilus (strain CNRZ 1066)).